The primary structure comprises 103 residues: UPF0473 protein SSA_2239 (103 aa).

It belongs to the UPF0473 family.

The chain is UPF0473 protein SSA_2239 from Streptococcus sanguinis (strain SK36).